Reading from the N-terminus, the 150-residue chain is Troponin C, isotype gamma (150 aa).

Methionine 1 is subject to N-acetylmethionine. EF-hand domains lie at 7-42, 43-78, 83-118, and 119-150; these read EQLS…MGVK, ISEK…FLIE, ALKA…LDNR, and LTED…MMSG. Ca(2+) contacts are provided by aspartate 56, aspartate 58, serine 60, glutamate 62, and glutamate 67. Ca(2+) contacts are provided by aspartate 132, aspartate 134, serine 136, threonine 138, and glutamate 143.

The protein belongs to the troponin C family.

In terms of biological role, troponin is the central regulatory protein of striated muscle contraction. Tn consists of three components: Tn-I which is the inhibitor of actomyosin ATPase, Tn-T which contains the binding site for tropomyosin and Tn-C. The binding of calcium to Tn-C abolishes the inhibitory action of Tn on actin filaments. The protein is Troponin C, isotype gamma of Astacus leptodactylus (Turkish narrow-clawed crayfish).